Here is a 363-residue protein sequence, read N- to C-terminus: Spindle pole body component SPC42 (363 aa).

The stretch at 60-137 (EFINKAVQQN…ANSTFKEMRF (78 aa)) forms a coiled coil. A disordered region spans residues 160–184 (PKHRAPDATGNPRTTNKVSNTSDQD). The segment covering 170 to 182 (NPRTTNKVSNTSD) has biased composition (polar residues). Serine 213, serine 217, serine 284, and serine 329 each carry phosphoserine. Residues 249–298 (DIMMYESAELKRVEEEIEELKRKILVRKKHDLRKLSLNNQLQELQSMMDG) are a coiled coil. The disordered stretch occupies residues 310–363 (HNHATHRHSSQSSRDYSPSSDACLECSNDLYEKNRVKPENNMSETFATPTPNNR). Low complexity predominate over residues 319–329 (SQSSRDYSPSS). The segment covering 349-363 (NNMSETFATPTPNNR) has biased composition (polar residues).

The protein belongs to the SPC42 family. In terms of assembly, component of the SPC110 complex containing at least CMD1, SPC29, SPC42 and SCP110.

Its subcellular location is the nucleus. It is found in the cytoplasm. It localises to the cytoskeleton. The protein localises to the microtubule organizing center. The protein resides in the spindle pole body. In terms of biological role, forms a polymeric layer at the periphery of the spindle pole body (SPB) central plaque which has an essential function during SPB duplication and may facilitate attachment of the SPB to the nuclear membrane. In Saccharomyces cerevisiae (strain ATCC 204508 / S288c) (Baker's yeast), this protein is Spindle pole body component SPC42 (SPC42).